The primary structure comprises 260 residues: Hydroxyethylthiazole kinase (260 aa).

The ATP site is built by R126 and S172. G199 contributes to the substrate binding site.

Belongs to the Thz kinase family. Requires Mg(2+) as cofactor.

The catalysed reaction is 5-(2-hydroxyethyl)-4-methylthiazole + ATP = 4-methyl-5-(2-phosphooxyethyl)-thiazole + ADP + H(+). Its pathway is cofactor biosynthesis; thiamine diphosphate biosynthesis; 4-methyl-5-(2-phosphoethyl)-thiazole from 5-(2-hydroxyethyl)-4-methylthiazole: step 1/1. Its function is as follows. Catalyzes the phosphorylation of the hydroxyl group of 4-methyl-5-beta-hydroxyethylthiazole (THZ). This chain is Hydroxyethylthiazole kinase, found in Burkholderia thailandensis (strain ATCC 700388 / DSM 13276 / CCUG 48851 / CIP 106301 / E264).